We begin with the raw amino-acid sequence, 301 residues long: Protein p34 (301 aa).

The next 5 membrane-spanning stretches (helical) occupy residues tyrosine 15–threonine 35, isoleucine 40–alanine 60, threonine 83–valine 103, threonine 120–isoleucine 140, and leucine 171–phenylalanine 191.

This sequence belongs to the cation diffusion facilitator (CDF) transporter (TC 2.A.4) family.

The protein localises to the cell membrane. In Rickettsia rickettsii (strain Sheila Smith), this protein is Protein p34 (p34).